The primary structure comprises 75 residues: DNA-directed RNA polymerase subunit epsilon (75 aa).

It belongs to the RNA polymerase subunit epsilon family. RNAP is composed of a core of 2 alpha, a beta and a beta' subunit. The core is associated with a delta subunit, and at least one of epsilon or omega. When a sigma factor is associated with the core the holoenzyme is formed, which can initiate transcription.

It carries out the reaction RNA(n) + a ribonucleoside 5'-triphosphate = RNA(n+1) + diphosphate. A non-essential component of RNA polymerase (RNAP). This is DNA-directed RNA polymerase subunit epsilon from Lactobacillus gasseri (strain ATCC 33323 / DSM 20243 / BCRC 14619 / CIP 102991 / JCM 1131 / KCTC 3163 / NCIMB 11718 / NCTC 13722 / AM63).